Consider the following 100-residue polypeptide: Urease subunit gamma (100 aa).

This sequence belongs to the urease gamma subunit family. In terms of assembly, heterotrimer of UreA (gamma), UreB (beta) and UreC (alpha) subunits. Three heterotrimers associate to form the active enzyme.

The protein localises to the cytoplasm. It catalyses the reaction urea + 2 H2O + H(+) = hydrogencarbonate + 2 NH4(+). Its pathway is nitrogen metabolism; urea degradation; CO(2) and NH(3) from urea (urease route): step 1/1. The sequence is that of Urease subunit gamma from Staphylococcus saprophyticus subsp. saprophyticus (strain ATCC 15305 / DSM 20229 / NCIMB 8711 / NCTC 7292 / S-41).